The following is a 312-amino-acid chain: uncharacterized protein (312 aa).

Catalysis depends on charge relay system residues Ser200, Asp261, and His292.

This sequence belongs to the AB hydrolase superfamily. AB hydrolase 2 family.

This is an uncharacterized protein from Acanthamoeba polyphaga mimivirus (APMV).